A 530-amino-acid chain; its full sequence is Probable NADH-specific resorcinol 4-hydroxylase (530 aa).

The catalysed reaction is resorcinol + NADH + O2 + H(+) = benzene-1,2,4-triol + NAD(+) + H2O. In terms of biological role, single-component hydroxylase that is part of the gamma-resorcylate (GRA) degradation pathway. GRA is initially converted by GRA decarboxylase to resorcinol, which is hydroxylated by resorcinol 4-hydroxylase. This Rhodococcus jostii (strain RHA1) protein is Probable NADH-specific resorcinol 4-hydroxylase (tsdB).